The chain runs to 465 residues: Ribulose bisphosphate carboxylase large chain (465 aa).

K4 is modified (N6,N6,N6-trimethyllysine). Residues N113 and T163 each contribute to the substrate site. K165 acts as the Proton acceptor in catalysis. A substrate-binding site is contributed by K167. 3 residues coordinate Mg(2+): K191, D193, and E194. Residue K191 is modified to N6-carboxylysine. H284 (proton acceptor) is an active-site residue. 3 residues coordinate substrate: R285, H317, and S369.

This sequence belongs to the RuBisCO large chain family. Type I subfamily. Heterohexadecamer of 8 large chains and 8 small chains; disulfide-linked. The disulfide link is formed within the large subunit homodimers. Requires Mg(2+) as cofactor. The disulfide bond which can form in the large chain dimeric partners within the hexadecamer appears to be associated with oxidative stress and protein turnover.

Its subcellular location is the plastid. It localises to the chloroplast. The enzyme catalyses 2 (2R)-3-phosphoglycerate + 2 H(+) = D-ribulose 1,5-bisphosphate + CO2 + H2O. It carries out the reaction D-ribulose 1,5-bisphosphate + O2 = 2-phosphoglycolate + (2R)-3-phosphoglycerate + 2 H(+). Functionally, ruBisCO catalyzes two reactions: the carboxylation of D-ribulose 1,5-bisphosphate, the primary event in carbon dioxide fixation, as well as the oxidative fragmentation of the pentose substrate in the photorespiration process. Both reactions occur simultaneously and in competition at the same active site. The sequence is that of Ribulose bisphosphate carboxylase large chain from Ephedra tweediana (Vining horsetail).